The following is a 148-amino-acid chain: Large ribosomal subunit protein cL37 (148 aa).

A chloroplast-targeting transit peptide spans 1-65 (MALLCFNSLP…SSHGRIVVKA (65 aa)). Ala66 is modified (N-acetylalanine). The segment at 125 to 148 (LVRKRKMRKKGRWPPSKMKKNKNV) is disordered.

Belongs to the chloroplast-specific ribosomal protein cL37 family. In terms of assembly, part of the 50S ribosomal subunit.

The protein localises to the plastid. It localises to the chloroplast. The chain is Large ribosomal subunit protein cL37 (PSRP5) from Arabidopsis thaliana (Mouse-ear cress).